Here is a 144-residue protein sequence, read N- to C-terminus: L-fucose mutarotase (144 aa).

His-22 acts as the Proton donor in catalysis. Substrate is bound by residues Asp-30, Arg-109, and 131-133; that span reads YGN.

It belongs to the RbsD / FucU family. FucU mutarotase subfamily. As to quaternary structure, homodecamer.

The protein resides in the cytoplasm. It carries out the reaction alpha-L-fucose = beta-L-fucose. The protein operates within carbohydrate metabolism; L-fucose metabolism. Functionally, involved in the anomeric conversion of L-fucose. The sequence is that of L-fucose mutarotase from Histophilus somni (strain 129Pt) (Haemophilus somnus).